The primary structure comprises 116 residues: Small ribosomal subunit protein uS11m (116 aa).

This sequence belongs to the universal ribosomal protein uS11 family.

It localises to the mitochondrion. In Chondrus crispus (Carrageen Irish moss), this protein is Small ribosomal subunit protein uS11m (RPS11).